We begin with the raw amino-acid sequence, 133 residues long: Agglutinin alpha chain (133 aa).

The region spanning 1–133 is the Jacalin-type lectin domain; that stretch reads GVTFDDGAYT…LDYFSIYLSL (133 aa).

Belongs to the jacalin lectin family. In terms of assembly, formed of four alpha chains and four beta chains.

In terms of biological role, D-galactose-specific lectin, binds the T-antigen structure Gal-beta1,3-GalNAc. The chain is Agglutinin alpha chain from Maclura pomifera (Osage orange).